We begin with the raw amino-acid sequence, 511 residues long: Sporulation-specific chitinase 2 (511 aa).

An N-terminal signal peptide occupies residues 1 to 34; the sequence is MVGHSAQHRSKSSLVSHLLILLIFITIIIEMCLY. The 400-residue stretch at 73–472 folds into the GH18 domain; sequence FISGVYYSNW…NAFNEGLHFN (400 aa). Asn147 carries an N-linked (GlcNAc...) asparagine glycan. The active-site Proton donor is the Glu223. Asn228, Asn456, and Asn472 each carry an N-linked (GlcNAc...) asparagine glycan.

The protein belongs to the glycosyl hydrolase 18 family. Chitinase class III subfamily.

The protein localises to the secreted. The enzyme catalyses Random endo-hydrolysis of N-acetyl-beta-D-glucosaminide (1-&gt;4)-beta-linkages in chitin and chitodextrins.. The polypeptide is Sporulation-specific chitinase 2 (CTS2) (Saccharomyces cerevisiae (strain ATCC 204508 / S288c) (Baker's yeast)).